The primary structure comprises 335 residues: Tryptophan--tRNA ligase (335 aa).

Residues 13–15 and 21–22 contribute to the ATP site; these read QPS and GN. Positions 14 to 22 match the 'HIGH' region motif; that stretch reads PSGELTIGN. Residue D138 participates in L-tryptophan binding. ATP-binding positions include 150–152, I189, and 198–202; these read GKD and KMSKS. Positions 198-202 match the 'KMSKS' region motif; that stretch reads KMSKS.

Belongs to the class-I aminoacyl-tRNA synthetase family. Homodimer.

The protein localises to the cytoplasm. It carries out the reaction tRNA(Trp) + L-tryptophan + ATP = L-tryptophyl-tRNA(Trp) + AMP + diphosphate + H(+). Catalyzes the attachment of tryptophan to tRNA(Trp). This chain is Tryptophan--tRNA ligase, found in Clostridium acetobutylicum (strain ATCC 824 / DSM 792 / JCM 1419 / IAM 19013 / LMG 5710 / NBRC 13948 / NRRL B-527 / VKM B-1787 / 2291 / W).